A 93-amino-acid chain; its full sequence is Small ribosomal subunit protein uS19c (93 aa).

The protein belongs to the universal ribosomal protein uS19 family.

Its subcellular location is the plastid. The protein localises to the chloroplast. Functionally, protein S19 forms a complex with S13 that binds strongly to the 16S ribosomal RNA. The sequence is that of Small ribosomal subunit protein uS19c from Stigeoclonium helveticum (Green alga).